We begin with the raw amino-acid sequence, 513 residues long: Bifunctional pantoate ligase/cytidylate kinase (513 aa).

The tract at residues 1–283 (MVQVFRTIAG…VGSTRLIDNL (283 aa)) is pantoate--beta-alanine ligase. ATP is bound at residue 30 to 37 (MGSLHAGH). The Proton donor role is filled by H37. Q61 contacts (R)-pantoate. Q61 is a beta-alanine binding site. 150–153 (GAKD) is a binding site for ATP. Q156 is a (R)-pantoate binding site. Residues V179 and 187-190 (MSSR) each bind ATP. The interval 284–513 (VLNHRLPIIA…IELYKKYNKG (230 aa)) is cytidylate kinase.

This sequence in the N-terminal section; belongs to the pantothenate synthetase family. The protein in the C-terminal section; belongs to the cytidylate kinase family. Type 1 subfamily.

The protein localises to the cytoplasm. The catalysed reaction is (R)-pantoate + beta-alanine + ATP = (R)-pantothenate + AMP + diphosphate + H(+). It carries out the reaction CMP + ATP = CDP + ADP. It catalyses the reaction dCMP + ATP = dCDP + ADP. It participates in cofactor biosynthesis; (R)-pantothenate biosynthesis; (R)-pantothenate from (R)-pantoate and beta-alanine: step 1/1. In terms of biological role, catalyzes the condensation of pantoate with beta-alanine in an ATP-dependent reaction via a pantoyl-adenylate intermediate. Its function is as follows. Catalyzes the transfer of a phosphate group from ATP to either CMP or dCMP to form CDP or dCDP and ADP, respectively. The sequence is that of Bifunctional pantoate ligase/cytidylate kinase from Synechocystis sp. (strain ATCC 27184 / PCC 6803 / Kazusa).